A 63-amino-acid chain; its full sequence is Gallinacin-4 (63 aa).

The first 19 residues, 1–19, serve as a signal peptide directing secretion; sequence MKILCFFIVLLFVAVHGAV. Residues 20 to 25 constitute a propeptide that is removed on maturation; that stretch reads GFSRSP. Cystine bridges form between C31–C59, C38–C53, and C43–C60.

It belongs to the beta-defensin family. In terms of tissue distribution, strong expression in the bone marrow and testis. Widely expressed. Weak expression in the ovarian stroma, but not expressed in the ovarian follicles.

The protein localises to the secreted. Its subcellular location is the cytoplasmic granule. Functionally, has bactericidal activity. Potent activity against S.typhimurium and S.entiriditis. This is Gallinacin-4 (GAL4) from Gallus gallus (Chicken).